Reading from the N-terminus, the 96-residue chain is Histone-like protein p6 (96 aa).

The DNA-binding element occupies 1-19; it reads MAKMMQREITKTTVNVAKM.

This sequence belongs to the phi29likevirus histone-like protein p6 family. As to quaternary structure, homodimer. Homomultimer. Binds to double-stranded DNA giving rise to multimeric nucleoprotein complexes. Binding specificity for the viral DNA is based on supercoiling, the viral genome having a negative superhelicity lower than that of plasmid DNA. Interacts with the DNA replication protein p17; this interaction optimizes the binding of protein p6 at the viral DNA ends, thus favoring the initiation of replication.

In terms of biological role, histone-like nucleoprotein that binds to the viral dsDNA and responsible for wrapping and compacting the viral DNA about 4-fold. Forms a nucleoprotein complex in which the DNA adopts a right-handed toroidal conformation winding around a protein core. Binds ito most, if not all, the viral genome, although with different affinity, the highest one corresponding to the genome ends. The formation of the nucleoprotein complex at the genome ends, activates the initiation of viral DNA replication. The binding of p6 would recruit the complex formed by the TP and the DNA polymerase to the origin. Protein p6 also represses early transcription from promoter C2, and, together with protein p4, represses transcription from promoters A2b and A2c and activates late transcription from promoter A3. Protein p6 is therefore involved in the early to late transcription switch. The formation of the nucleoprotein complex at the right end of the phage genome where the early promoter C2 is located affects local topology, which may contribute to the promoter repression. This chain is Histone-like protein p6 (6), found in Bacillus phage PZA (Bacteriophage PZA).